The primary structure comprises 607 residues: Protease Do-like 2, chloroplastic (607 aa).

The tract at residues 41 to 104 (SSNIKRKSSR…LSDFSRDQQT (64 aa)) is disordered. Residues 87–104 (PKKEKKESLSDFSRDQQT) show a composition bias toward basic and acidic residues. The interval 118–317 (VVKVYCTHTA…LTDYERNGKY (200 aa)) is serine protease. Catalysis depends on charge relay system residues histidine 159, aspartate 190, and serine 268. The PDZ domain maps to 308-403 (LTDYERNGKY…YLISQKFAGD (96 aa)).

It belongs to the peptidase S1C family.

It is found in the plastid. Its subcellular location is the chloroplast thylakoid membrane. Its function is as follows. Serine protease that performs the primary cleavage of the photodamaged D1 protein in plant photosystem II. The protein is Protease Do-like 2, chloroplastic (DEGP2) of Arabidopsis thaliana (Mouse-ear cress).